The sequence spans 53 residues: Bowman-Birk type proteinase inhibitor II-4 (53 aa).

4 cysteine pairs are disulfide-bonded: Cys8–Cys23, Cys13–Cys21, Cys30–Cys37, and Cys34–Cys49.

This sequence belongs to the Bowman-Birk serine protease inhibitor family.

The protein is Bowman-Birk type proteinase inhibitor II-4 of Triticum aestivum (Wheat).